A 342-amino-acid polypeptide reads, in one-letter code: Paired box protein Pax-9 (342 aa).

Residues 4–130 (AFGEVNQLGG…SSISRILRNK (127 aa)) constitute a DNA-binding region (paired). The tract at residues 7-63 (EVNQLGGVFVNGRPLPNAIRLRIVELAQLGIRPCDISRQLRVSHGCVSKILARYNET) is PAI subdomain. The tract at residues 82-130 (TVVKHIRTYKQRDPGIFAWEIRDRLLADGVCDKYNVPSVSSISRILRNK) is RED subdomain. The tract at residues 168–189 (AAAAKVPTPPGVPAIPGSVALP) is interaction with KDM5B.

As to quaternary structure, interacts with KDM5B.

It localises to the nucleus. In terms of biological role, transcription factor required for normal development of thymus, parathyroid glands, ultimobranchial bodies, teeth, skeletal elements of skull and larynx as well as distal limbs. This chain is Paired box protein Pax-9, found in Rattus norvegicus (Rat).